Reading from the N-terminus, the 317-residue chain is MSITLNSGYEMPSVGFGCWKVDKATCADTIYNAIKVGYRLFDGAEDYGNEKEVGEGINRALDEGLVARDELFVVSKLWNSFHDPKNVEKALDRTLSDLKVDYLDLFLIHFPIAFKFVPFEEKYPPGFYCGDGDKFIYEGVPIIDTWRALEKMVEKGKIRSIGISNFPGALIQDLLRGAKIKPAVLQIEHHPYLQQPRLIEYVQSQGIAITAYSSFGPQSFVELNHPRVKDVKPLFEHDVIKSVAEKANKTPAQVLLRWATQRGLAVIPKSNNPDRLLSNLKVNDFDLSQEDFKEISKLDIELRFNNPWDWDKIPTFV.

Tyr-47 serves as the catalytic Proton donor. Position 109 (His-109) interacts with substrate. Residues 164-165, 213-222, and 269-279 each bind NADP(+); these read SN, SSFGPQSFVE, and KSNNPDRLLSN.

Belongs to the aldo/keto reductase family.

The catalysed reaction is xylitol + NAD(+) = D-xylose + NADH + H(+). It carries out the reaction xylitol + NADP(+) = D-xylose + NADPH + H(+). The protein operates within carbohydrate metabolism; D-xylose degradation. Reduces D-xylose into xylitol. Preferentially utilizes NADPH as a cosubstrate. The chain is NADPH-dependent D-xylose reductase (XYL1) from Meyerozyma guilliermondii (strain ATCC 6260 / CBS 566 / DSM 6381 / JCM 1539 / NBRC 10279 / NRRL Y-324) (Yeast).